Reading from the N-terminus, the 315-residue chain is Cross-pathway control WD-repeat protein 2 (315 aa).

WD repeat units lie at residues 14 to 54 (GHKG…DSYG), 62 to 101 (GHNH…TTRR), 104 to 144 (GHTS…YDIK), 147 to 188 (CHTE…LKTN), 191 to 230 (GHTG…HLYS), 232 to 270 (EAGD…IVDE), and 282 to 315 (GRQP…TVTS).

Belongs to the WD repeat G protein beta family. Ribosomal protein RACK1 subfamily.

Functionally, component of the ribosome, a large ribonucleoprotein complex responsible for the synthesis of proteins in the cell. The small ribosomal subunit (SSU) binds messenger RNAs (mRNAs) and translates the encoded message by selecting cognate aminoacyl-transfer RNA (tRNA) molecules. The large subunit (LSU) contains the ribosomal catalytic site termed the peptidyl transferase center (PTC), which catalyzes the formation of peptide bonds, thereby polymerizing the amino acids delivered by tRNAs into a polypeptide chain. The nascent polypeptides leave the ribosome through a tunnel in the LSU and interact with protein factors that function in enzymatic processing, targeting, and the membrane insertion of nascent chains at the exit of the ribosomal tunnel. Plays in important role in the regulation of vegetative growth and fruiting body development. Especially, positively regulates the expression of genes involved in fruiting body development such as FVFD30 and FVFD16, as well as genes encoding for lectins and hydrophobins. Also regulates the expression of genes involved in cAMP signaling pathway. In Flammulina velutipes (Agaricus velutipes), this protein is Cross-pathway control WD-repeat protein 2.